An 815-amino-acid chain; its full sequence is Bifunctional purine biosynthetic protein purD (815 aa).

Residues 6-452 (NILVIGSGSR…YRKDIGQKAL (447 aa)) form a GARS region. The ATP-grasp domain occupies 113 to 343 (KDFMARNNIP…LFEIVLACIE (231 aa)). ATP is bound at residue 139-200 (IESLNYKIVL…EEFLDGEECS (62 aa)). Mg(2+) contacts are provided by glutamate 313 and asparagine 315. The tract at residues 469 to 801 (VSYSESGVDI…KVYKIGKIIN (333 aa)) is AIRS.

In the N-terminal section; belongs to the GARS family. The protein in the C-terminal section; belongs to the AIR synthase family. Mg(2+) serves as cofactor. Mn(2+) is required as a cofactor.

The protein localises to the cytoplasm. It is found in the cytosol. The enzyme catalyses 5-phospho-beta-D-ribosylamine + glycine + ATP = N(1)-(5-phospho-beta-D-ribosyl)glycinamide + ADP + phosphate + H(+). It carries out the reaction 2-formamido-N(1)-(5-O-phospho-beta-D-ribosyl)acetamidine + ATP = 5-amino-1-(5-phospho-beta-D-ribosyl)imidazole + ADP + phosphate + H(+). It participates in purine metabolism; IMP biosynthesis via de novo pathway; 5-amino-1-(5-phospho-D-ribosyl)imidazole from N(2)-formyl-N(1)-(5-phospho-D-ribosyl)glycinamide: step 2/2. The protein operates within purine metabolism; IMP biosynthesis via de novo pathway; N(1)-(5-phospho-D-ribosyl)glycinamide from 5-phospho-alpha-D-ribose 1-diphosphate: step 2/2. Functionally, catalyzes the second and fifth step in the 'de novo' purine biosynthesis pathway; contains phosphoribosylamine--glycine ligase (GARS) and phosphoribosylformylglycinamidine cyclo-ligase (AIRS) activities. The polypeptide is Bifunctional purine biosynthetic protein purD (purD) (Dictyostelium discoideum (Social amoeba)).